Here is a 156-residue protein sequence, read N- to C-terminus: Small ribosomal subunit protein uS7c (156 aa).

It belongs to the universal ribosomal protein uS7 family. In terms of assembly, part of the 30S ribosomal subunit.

It localises to the plastid. The protein resides in the chloroplast. In terms of biological role, one of the primary rRNA binding proteins, it binds directly to 16S rRNA where it nucleates assembly of the head domain of the 30S subunit. This is Small ribosomal subunit protein uS7c (rps7) from Rhodomonas salina (Cryptomonas salina).